Here is a 381-residue protein sequence, read N- to C-terminus: Queuine tRNA-ribosyltransferase (381 aa).

Aspartate 92 functions as the Proton acceptor in the catalytic mechanism. Substrate is bound by residues 92–96 (DSGGF), aspartate 146, glutamine 190, and glycine 217. Residues 248-254 (GVGRPED) are RNA binding. The active-site Nucleophile is the aspartate 267. An RNA binding; important for wobble base 34 recognition region spans residues 272–276 (TRNAR). Zn(2+) is bound by residues cysteine 305, cysteine 307, cysteine 310, and histidine 337.

Belongs to the queuine tRNA-ribosyltransferase family. In terms of assembly, homodimer. Within each dimer, one monomer is responsible for RNA recognition and catalysis, while the other monomer binds to the replacement base PreQ1. Zn(2+) serves as cofactor.

It carries out the reaction 7-aminomethyl-7-carbaguanine + guanosine(34) in tRNA = 7-aminomethyl-7-carbaguanosine(34) in tRNA + guanine. It participates in tRNA modification; tRNA-queuosine biosynthesis. Its function is as follows. Catalyzes the base-exchange of a guanine (G) residue with the queuine precursor 7-aminomethyl-7-deazaguanine (PreQ1) at position 34 (anticodon wobble position) in tRNAs with GU(N) anticodons (tRNA-Asp, -Asn, -His and -Tyr). Catalysis occurs through a double-displacement mechanism. The nucleophile active site attacks the C1' of nucleotide 34 to detach the guanine base from the RNA, forming a covalent enzyme-RNA intermediate. The proton acceptor active site deprotonates the incoming PreQ1, allowing a nucleophilic attack on the C1' of the ribose to form the product. After dissociation, two additional enzymatic reactions on the tRNA convert PreQ1 to queuine (Q), resulting in the hypermodified nucleoside queuosine (7-(((4,5-cis-dihydroxy-2-cyclopenten-1-yl)amino)methyl)-7-deazaguanosine). This Xanthomonas oryzae pv. oryzae (strain MAFF 311018) protein is Queuine tRNA-ribosyltransferase.